The chain runs to 509 residues: Hexokinase-4, chloroplastic (509 aa).

A chloroplast-targeting transit peptide spans 1-37; sequence MSAAAAIASPIPAAIAVVQQQRRGRSRGGGSGAAAVR. Residues 45–496 form the Hexokinase domain; that stretch reads SAIAPILADL…SGIGAALLAA (452 aa). The tract at residues 100 to 238 is hexokinase small subdomain; that stretch reads TGNETGLFYA…GLDMRVSALV (139 aa). Positions 114, 115, and 116 each coordinate ADP. Residues threonine 204, lysine 205, asparagine 239, and aspartate 240 each coordinate D-glucose. The segment at 239–485 is hexokinase large subdomain; sequence NDTVGTLAGA…NRIAIEHTKD (247 aa). An ADP-binding site is contributed by threonine 263. Positions 266, 294, and 324 each coordinate D-glucose. Residue glycine 450 participates in ADP binding.

It belongs to the hexokinase family. In terms of tissue distribution, expressed in roots, leaves, flowers, immature seeds, endosperm and seed coat.

It is found in the plastid. The protein resides in the chloroplast stroma. The catalysed reaction is a D-hexose + ATP = a D-hexose 6-phosphate + ADP + H(+). It catalyses the reaction D-fructose + ATP = D-fructose 6-phosphate + ADP + H(+). It carries out the reaction D-glucose + ATP = D-glucose 6-phosphate + ADP + H(+). The protein operates within carbohydrate metabolism; hexose metabolism. It functions in the pathway carbohydrate degradation; glycolysis; D-glyceraldehyde 3-phosphate and glycerone phosphate from D-glucose: step 1/4. In terms of biological role, fructose and glucose phosphorylating enzyme. The polypeptide is Hexokinase-4, chloroplastic (HXK4) (Oryza sativa subsp. japonica (Rice)).